The chain runs to 325 residues: Probable 4-hydroxy-tetrahydrodipicolinate reductase 2, chloroplastic (325 aa).

Residues 1-32 constitute a chloroplast transit peptide; sequence MLSLRPPCTLSPAPWRRRRTLHGAAGTPQRVS. Residues 57-62, 149-151, and 172-175 contribute to the NAD(+) site; these read GCTGKM, GTT, and SPQM. Histidine 208 functions as the Proton donor/acceptor in the catalytic mechanism. Residue lysine 212 is the Proton donor of the active site. Residue 217 to 218 coordinates (S)-2,3,4,5-tetrahydrodipicolinate; sequence GT.

The protein belongs to the DapB family.

The protein localises to the plastid. It is found in the chloroplast. The catalysed reaction is (S)-2,3,4,5-tetrahydrodipicolinate + NAD(+) + H2O = (2S,4S)-4-hydroxy-2,3,4,5-tetrahydrodipicolinate + NADH + H(+). It carries out the reaction (S)-2,3,4,5-tetrahydrodipicolinate + NADP(+) + H2O = (2S,4S)-4-hydroxy-2,3,4,5-tetrahydrodipicolinate + NADPH + H(+). The protein operates within amino-acid biosynthesis; L-lysine biosynthesis via DAP pathway; (S)-tetrahydrodipicolinate from L-aspartate: step 4/4. Its function is as follows. Catalyzes the conversion of 4-hydroxy-tetrahydrodipicolinate (HTPA) to tetrahydrodipicolinate. The polypeptide is Probable 4-hydroxy-tetrahydrodipicolinate reductase 2, chloroplastic (DAPB2) (Oryza sativa subsp. japonica (Rice)).